We begin with the raw amino-acid sequence, 451 residues long: Phenylalanine--tRNA ligase, mitochondrial (451 aa).

Substrate contacts are provided by residues 157 to 160 (SAHQ), arginine 179, 186 to 188 (QHY), and 193 to 195 (QLE). N6-acetyllysine is present on lysine 202. Substrate-binding residues include glutamate 287 and phenylalanine 312. The FDX-ACB domain occupies 358–450 (SKYPAVINDI…AVQLLGVEGR (93 aa)).

Belongs to the class-II aminoacyl-tRNA synthetase family. In terms of assembly, monomer.

It localises to the mitochondrion matrix. The protein resides in the mitochondrion. It carries out the reaction tRNA(Phe) + L-phenylalanine + ATP = L-phenylalanyl-tRNA(Phe) + AMP + diphosphate + H(+). In terms of biological role, is responsible for the charging of tRNA(Phe) with phenylalanine in mitochondrial translation. To a lesser extent, also catalyzes direct attachment of m-Tyr (an oxidized version of Phe) to tRNA(Phe), thereby opening the way for delivery of the misacylated tRNA to the ribosome and incorporation of ROS-damaged amino acid into proteins. The chain is Phenylalanine--tRNA ligase, mitochondrial (FARS2) from Homo sapiens (Human).